An 828-amino-acid polypeptide reads, in one-letter code: Beta-galactosidase 13 (828 aa).

An N-terminal signal peptide occupies residues 1–23 (MKTTMAAAATCLVALLVVVLAEA). Asn-157 is a glycosylation site (N-linked (GlcNAc...) asparagine). Residue Glu-187 is the Proton donor of the active site. Asn-198 and Asn-249 each carry an N-linked (GlcNAc...) asparagine glycan. Glu-259 functions as the Nucleophile in the catalytic mechanism. Asn-260, Asn-362, Asn-366, Asn-392, Asn-502, Asn-578, Asn-586, and Asn-615 each carry an N-linked (GlcNAc...) asparagine glycan. Residues 746 to 828 (AEVGDAITLS…SGVLTVQASC (83 aa)) enclose the SUEL-type lectin domain.

This sequence belongs to the glycosyl hydrolase 35 family.

It localises to the secreted. Its subcellular location is the extracellular space. The protein localises to the apoplast. It catalyses the reaction Hydrolysis of terminal non-reducing beta-D-galactose residues in beta-D-galactosides.. The polypeptide is Beta-galactosidase 13 (Oryza sativa subsp. japonica (Rice)).